We begin with the raw amino-acid sequence, 151 residues long: MNPENWLLLRRVVRFGDTDAAGVMHFHQLFRWCHESWEESLESYGLNPADIFPGSRKSEVTPEVALPIIHCQADFRRPIHTGDALAMELRPERLNPNSFQVHFEFRCEEQIAAHALIRHLAINAQTRHRCALPEGIDRWLEASGVGKIGSI.

The active site involves Asp19.

Belongs to the 4-hydroxybenzoyl-CoA thioesterase family. DHNA-CoA hydrolase subfamily.

It catalyses the reaction 1,4-dihydroxy-2-naphthoyl-CoA + H2O = 1,4-dihydroxy-2-naphthoate + CoA + H(+). It participates in cofactor biosynthesis; phylloquinone biosynthesis. It functions in the pathway quinol/quinone metabolism; 1,4-dihydroxy-2-naphthoate biosynthesis; 1,4-dihydroxy-2-naphthoate from chorismate: step 7/7. Its function is as follows. Catalyzes the hydrolysis of 1,4-dihydroxy-2-naphthoyl-CoA (DHNA-CoA) to 1,4-dihydroxy-2-naphthoate (DHNA), a reaction involved in phylloquinone (vitamin K1) biosynthesis. This chain is 1,4-dihydroxy-2-naphthoyl-CoA hydrolase, found in Prochlorococcus marinus (strain MIT 9313).